Consider the following 561-residue polypeptide: Probable oligo-1,6-glucosidase 2 (561 aa).

The active-site Nucleophile is D199. Catalysis depends on E255, which acts as the Proton donor.

This sequence belongs to the glycosyl hydrolase 13 family.

It is found in the cytoplasm. The catalysed reaction is Hydrolysis of (1-&gt;6)-alpha-D-glucosidic linkages in some oligosaccharides produced from starch and glycogen by alpha-amylase, and in isomaltose.. This is Probable oligo-1,6-glucosidase 2 (ycdG) from Bacillus subtilis (strain 168).